A 204-amino-acid polypeptide reads, in one-letter code: MYNVECIPIKDIKPGLKNINVIFIVLEVGVATVTKENREVRNFKVGDPTACINVSIWDEPGKLIAPGDIVRLTKGYASIWRHCLTLYSGKNGEVFKIGEYCMVFNESVNMSEPKRAEQQAVANPAATPAGLPAGGGAPGLPAKGGATGIPQPAVAAAPGAPATQSAVTTAPAAAPAIAPQTTTKPGTRGGRGGGGRGGLKGERR.

A DNA-binding region (OB) is located at residues 24–94 (IVLEVGVATV…TLYSGKNGEV (71 aa)). A disordered region spans residues 115–204 (RAEQQAVANP…GRGGLKGERR (90 aa)). Composition is skewed to low complexity over residues 122 to 131 (ANPAATPAGL) and 139 to 183 (GLPA…QTTT). The segment covering 187-198 (TRGGRGGGGRGG) has biased composition (gly residues).

It belongs to the SOSS-B family.

The polypeptide is SOSS complex subunit B homolog (Drosophila melanogaster (Fruit fly)).